A 309-amino-acid chain; its full sequence is Sporulation sigma-E factor-processing peptidase (309 aa).

The next 5 helical transmembrane spans lie at 7-27 (VIWL…AFIL), 36-55 (LVGG…TPFS), 61-78 (PAGK…TFGF), 88-105 (LFSF…IIGA), and 130-147 (PISW…WFFS). The active site involves D183.

The protein belongs to the peptidase U4 family. In terms of assembly, self-associates. Interacts with SigE. Interacts with SpoIIR.

The protein resides in the cell membrane. Its function is as follows. Probable aspartic protease that is responsible for the proteolytic cleavage of the RNA polymerase sigma E factor (SigE/spoIIGB) to yield the active peptide in the mother cell during sporulation. Responds to a signal from the forespore that is triggered by the extracellular signal protein SpoIIR. This Bacillus subtilis (strain 168) protein is Sporulation sigma-E factor-processing peptidase (spoIIGA).